The sequence spans 123 residues: Large ribosomal subunit protein eL8 (123 aa).

This sequence belongs to the eukaryotic ribosomal protein eL8 family. In terms of assembly, part of the 50S ribosomal subunit. Probably part of the RNase P complex.

The protein localises to the cytoplasm. Functionally, multifunctional RNA-binding protein that recognizes the K-turn motif in ribosomal RNA, the RNA component of RNase P, box H/ACA, box C/D and box C'/D' sRNAs. The protein is Large ribosomal subunit protein eL8 of Methanobrevibacter smithii (strain ATCC 35061 / DSM 861 / OCM 144 / PS).